The sequence spans 188 residues: Elongation factor P (188 aa).

The protein belongs to the elongation factor P family.

It is found in the cytoplasm. It participates in protein biosynthesis; polypeptide chain elongation. Involved in peptide bond synthesis. Stimulates efficient translation and peptide-bond synthesis on native or reconstituted 70S ribosomes in vitro. Probably functions indirectly by altering the affinity of the ribosome for aminoacyl-tRNA, thus increasing their reactivity as acceptors for peptidyl transferase. This is Elongation factor P from Chlorobaculum parvum (strain DSM 263 / NCIMB 8327) (Chlorobium vibrioforme subsp. thiosulfatophilum).